Here is a 600-residue protein sequence, read N- to C-terminus: Na(+)/dicarboxylate cotransporter 3 (600 aa).

Topologically, residues 1–16 (MAALAALAKKVWSARR) are cytoplasmic. Residues 17-37 (LLVLLLVPLALLPILFALPPK) traverse the membrane as a helical segment. Residues 38–55 (EGRCLYVILLMAVYWCTE) lie on the Extracellular side of the membrane. Residues 56 to 76 (ALPLSVTALLPIILFPFMGIL) traverse the membrane as a helical segment. Topologically, residues 77–82 (PSSKVC) are cytoplasmic. A helical membrane pass occupies residues 83–103 (PQYFLDTNFLFLSGLIMASAI). Over 104-137 (EERNLHRRIALKVLMLVGVQPARLILGMMVTTSF) the chain is Extracellular. A helical transmembrane segment spans residues 138–158 (LSMWLSNTASTAMMLPIASAI). Over 159–229 (LKSLFGQRDT…KEEEHRRNIW (71 aa)) the chain is Cytoplasmic. Residues 230–250 (KGFLISIPYSASIGGTATLTG) form a helical membrane-spanning segment. The Extracellular segment spans residues 251 to 278 (TAPNLILLGQLKSFFPQCDVVNFGSWFI). The helical transmembrane segment at 279-299 (FAFPLMLLFLLVGWLWISFLY) threads the bilayer. Topologically, residues 300 to 336 (GGMSWRGWRKKNSKLQDVAEDKAKAVIQEEFQNLGPI) are cytoplasmic. Residues 337 to 357 (KFAEQAVFILFCLFAILLFSR) traverse the membrane as a helical segment. At 358 to 372 (DPKFIPGWASLFAPG) the chain is on the extracellular side. Residues 373–393 (FVSDAVTGVAIVTILFFFPSQ) form a helical membrane-spanning segment. The Cytoplasmic segment spans residues 394-422 (KPSLKWWFDFKAPNSETEPLLSWKKAQET). Positions 423–443 (VPWNIILLLGGGFAMAKGCEE) form an intramembrane region, helical. Topologically, residues 444 to 461 (SGLSAWIGGQLHPLEHVP) are cytoplasmic. A helical membrane pass occupies residues 462–482 (PLLAVLLITVVIAFFTEFASN). The Extracellular portion of the chain corresponds to 483–505 (TATIIIFLPVLAELAIRLHVHPL). A helical membrane pass occupies residues 506 to 526 (YLMIPGTVSCSYAFMLPVSTP). Over 527-546 (PNSIAFSTGHLLVKDMVRTG) the chain is Cytoplasmic. A helical transmembrane segment spans residues 547-567 (LLMNLMGVLLLSLAMNTWAQA). Residues 568–600 (IFQLGTFPDWANTHAANVTALPPALTNNTVQTL) are Extracellular-facing. Asn584 and Asn594 each carry an N-linked (GlcNAc...) asparagine glycan.

It belongs to the SLC13A/DASS transporter (TC 2.A.47) family. NADC subfamily. In terms of tissue distribution, highly expressed in proximal parts of straight tubules in the kidney. Detected in placenta, in brain, and in liver. Strongly expressed within the meningeal layers of supporting tissue that surround the brain and relatively weakly expressed throughout the cerebral cortex, hippocampus, and cerebellum.

It is found in the cell membrane. The catalysed reaction is succinate(out) + 3 Na(+)(out) = succinate(in) + 3 Na(+)(in). It catalyses the reaction 2-oxoglutarate(out) + 3 Na(+)(out) = 2-oxoglutarate(in) + 3 Na(+)(in). It carries out the reaction N-acetyl-L-aspartate(out) + 3 Na(+)(out) = N-acetyl-L-aspartate(in) + 3 Na(+)(in). The enzyme catalyses glutarate(out) + 3 Na(+)(out) = glutarate(in) + 3 Na(+)(in). The catalysed reaction is fumarate(out) + 3 Na(+)(out) = fumarate(in) + 3 Na(+)(in). It catalyses the reaction malate(out) + 3 Na(+)(out) = malate(in) + 3 Na(+)(in). It carries out the reaction 2,2-dimethylsuccinate(out) + 3 Na(+)(out) = 2,2-dimethylsuccinate(in) + 3 Na(+)(in). The enzyme catalyses 2,3-dimethylsuccinate(out) + 3 Na(+)(out) = 2,3-dimethylsuccinate(in) + 3 Na(+)(in). The catalysed reaction is itaconate(out) + 3 Na(+)(out) = itaconate(in) + 3 Na(+)(in). Li(+) decreases succinate transport in the presence of Na(+). In terms of biological role, high-affinity sodium-dicarboxylate cotransporter that accepts a range of substrates with 4-6 carbon atoms, such as the citric acid cycle intermediates succinate and alpha-ketoglutarate (2-oxoglutarate), as well as other compounds including N-acetyl-L-aspartate. Transports the dicarboxylate into the cell with a probable stoichiometry of 3 Na(+) for 1 divalent dicarboxylate, rendering the process electrogenic. Can transport citrate in a Na(+)-dependent manner, recognizing the divalent form of citrate rather than the trivalent form which is normally found in blood. Imports itaconate in hepatocytes leading to activation of TFEB-dependent lysosomal biogenesis involved in antibacterial innate immune response. The sequence is that of Na(+)/dicarboxylate cotransporter 3 (Slc13a3) from Rattus norvegicus (Rat).